Consider the following 193-residue polypeptide: MEKKRTLSVNSGNNELIPPQPPSSPKTKNSLNNIENNECNNNNNNNNNNNNNNSNSNNLNNSNNNNINTSSNSINSSNSINNSIDNIDNKDNHQQKYYLPPSKMNSSQEFQSYLTPNKNNNNRNNNNRNNNNNNNNNNNNEGTIQNFTSRMLNSIIMYMIRPFLVGASASFGISIGMFYFSPFPPSFLPSSPS.

A disordered region spans residues 1–144 (MEKKRTLSVN…NNNNNNEGTI (144 aa)). Positions 29–86 (NSLNNIENNECNNNNNNNNNNNNNNSNSNNLNNSNNNNINTSSNSINSSNSINNSIDN) are enriched in low complexity. Positions 103-118 (KMNSSQEFQSYLTPNK) are enriched in polar residues. Over residues 119–140 (NNNNRNNNNRNNNNNNNNNNNN) the composition is skewed to low complexity. Residues 158-180 (YMIRPFLVGASASFGISIGMFYF) traverse the membrane as a helical segment.

The protein localises to the membrane. This is an uncharacterized protein from Dictyostelium discoideum (Social amoeba).